We begin with the raw amino-acid sequence, 37 residues long: MKVQPSVKKICDKCKVIRRHGRVMVICDNPRHKQRQG.

It belongs to the bacterial ribosomal protein bL36 family.

The chain is Large ribosomal subunit protein bL36 from Cutibacterium acnes (strain DSM 16379 / KPA171202) (Propionibacterium acnes).